Here is a 499-residue protein sequence, read N- to C-terminus: Lysine--tRNA ligase (499 aa).

Mg(2+) is bound by residues E403 and E410.

This sequence belongs to the class-II aminoacyl-tRNA synthetase family. As to quaternary structure, homodimer. It depends on Mg(2+) as a cofactor.

The protein resides in the cytoplasm. The enzyme catalyses tRNA(Lys) + L-lysine + ATP = L-lysyl-tRNA(Lys) + AMP + diphosphate. In Campylobacter hominis (strain ATCC BAA-381 / DSM 21671 / CCUG 45161 / LMG 19568 / NCTC 13146 / CH001A), this protein is Lysine--tRNA ligase.